Consider the following 688-residue polypeptide: Methionine--tRNA ligase (688 aa).

The 'HIGH' region signature appears at 20-30 (PYANGSIHLGH). Positions 151, 154, 164, and 167 each coordinate Zn(2+). The 'KMSKS' region signature appears at 337 to 341 (KMSKS). Residue Lys340 participates in ATP binding. Residues 587–688 (TFAQVDLRIA…EGAQPGMRVM (102 aa)) enclose the tRNA-binding domain.

Belongs to the class-I aminoacyl-tRNA synthetase family. MetG type 1 subfamily. As to quaternary structure, homodimer. It depends on Zn(2+) as a cofactor.

The protein localises to the cytoplasm. The enzyme catalyses tRNA(Met) + L-methionine + ATP = L-methionyl-tRNA(Met) + AMP + diphosphate. Is required not only for elongation of protein synthesis but also for the initiation of all mRNA translation through initiator tRNA(fMet) aminoacylation. The protein is Methionine--tRNA ligase of Vibrio parahaemolyticus serotype O3:K6 (strain RIMD 2210633).